Consider the following 138-residue polypeptide: Basic phospholipase A2 B (138 aa).

The first 16 residues, 1–16 (MRALWIVAVLLLGVEG), serve as a signal peptide directing secretion. 7 cysteine pairs are disulfide-bonded: cysteine 42–cysteine 131, cysteine 44–cysteine 60, cysteine 59–cysteine 111, cysteine 65–cysteine 138, cysteine 66–cysteine 104, cysteine 73–cysteine 97, and cysteine 91–cysteine 102. The Ca(2+) site is built by tyrosine 43, glycine 45, and glycine 47. The active site involves histidine 63. A Ca(2+)-binding site is contributed by aspartate 64. The active site involves aspartate 105.

It belongs to the phospholipase A2 family. Group II subfamily. D49 sub-subfamily. Ca(2+) serves as cofactor. In terms of tissue distribution, expressed by the venom gland.

It localises to the secreted. The catalysed reaction is a 1,2-diacyl-sn-glycero-3-phosphocholine + H2O = a 1-acyl-sn-glycero-3-phosphocholine + a fatty acid + H(+). Snake venom phospholipase A2 (PLA2) that shows potent hemolytic activity, and exhibits medium anticoagulant effects by binding to factor Xa (F10) and inhibiting the prothrombinase activity (IC(50) is 90 nM). It is one of the few phospholipases A2 capable of hydrolyzing the phospholipids of E.coli membranes in the presence of a bactericidal/permeability-increasing protein (BPI) of neutrophils. PLA2 catalyzes the calcium-dependent hydrolysis of the 2-acyl groups in 3-sn-phosphoglycerides. The protein is Basic phospholipase A2 B of Gloydius halys (Chinese water mocassin).